We begin with the raw amino-acid sequence, 307 residues long: Olfactory receptor 13G1 (307 aa).

Topologically, residues 1 to 22 are extracellular; the sequence is MNHSVVTEFIILGLTKKPELQG. Residue Asn-2 is glycosylated (N-linked (GlcNAc...) asparagine). Residues 23–43 traverse the membrane as a helical segment; that stretch reads IIFLFFLIVYLVAFLGNMLII. Residues 44–51 are Cytoplasmic-facing; sequence IAKIYNNT. A helical membrane pass occupies residues 52–72; it reads LHTPMYVFLLTLAVVDIICTT. At 73-96 the chain is on the extracellular side; it reads SIIPKMLGTMLTSENTISYAGCMS. Cys-94 and Cys-186 are joined by a disulfide. Residues 97–117 form a helical membrane-spanning segment; that stretch reads QLFLFTWSLGAEMVLFTTMAY. Residues 118-136 lie on the Cytoplasmic side of the membrane; the sequence is DRYVAICFPLHYSTIMNHH. A helical membrane pass occupies residues 137-157; sequence MCVALLSMVMAIAVTNSWVHT. The Extracellular portion of the chain corresponds to 158-194; sequence ALIMRLTFCGPNTIDHFFCEIPPLLALSCSPVRINEV. The chain crosses the membrane as a helical span at residues 195–214; sequence MVYVADITLAIGDFILTCIS. Residues 215–234 are Cytoplasmic-facing; sequence YGFIIVAILRIRTVEGKRKA. The helical transmembrane segment at 235-255 threads the bilayer; the sequence is FSTCSSHLTVVTLYYSPVIYT. Residues 256-268 are Extracellular-facing; sequence YIRPASSYTFERD. The chain crosses the membrane as a helical span at residues 269 to 289; sequence KVVAALYTLVTPTLNPMVYSF. The Cytoplasmic segment spans residues 290–307; it reads QNREMQAGIRKVFAFLKH.

The protein belongs to the G-protein coupled receptor 1 family.

It is found in the cell membrane. Its function is as follows. Odorant receptor. In Homo sapiens (Human), this protein is Olfactory receptor 13G1 (OR13G1).